We begin with the raw amino-acid sequence, 433 residues long: Pectinesterase B (433 aa).

Residues 1–21 (MSLTHYSGLAAAVSMSLILTA) form the signal peptide. Cys-22 is lipidated: N-palmitoyl cysteine. Residue Cys-22 is the site of S-diacylglycerol cysteine attachment. Topologically, residues 22–433 (CGGQTPNSAR…EYNTQVLLHE (412 aa)) are periplasmic. Substrate-binding residues include Thr-202 and Gln-236. The Proton donor role is filled by Asp-259. The active-site Nucleophile is Asp-292. Residues Arg-356 and Trp-358 each contribute to the substrate site.

It belongs to the pectinesterase family.

It is found in the cell outer membrane. The catalysed reaction is [(1-&gt;4)-alpha-D-galacturonosyl methyl ester](n) + n H2O = [(1-&gt;4)-alpha-D-galacturonosyl](n) + n methanol + n H(+). Its pathway is glycan metabolism; pectin degradation; 2-dehydro-3-deoxy-D-gluconate from pectin: step 1/5. In terms of biological role, probably involved in the degradation of methylated oligogalacturonides present in the periplasm. More active on methylated oligogalacturides than on pectin. In Dickeya dadantii (strain 3937) (Erwinia chrysanthemi (strain 3937)), this protein is Pectinesterase B.